Reading from the N-terminus, the 560-residue chain is (E)-beta-farnesene synthase (560 aa).

Residues Asp312, Asp316, Asp457, and Glu465 each coordinate Mg(2+). The short motif at 312 to 316 (DDTFD) is the DDXXD motif element.

The protein belongs to the terpene synthase family. It depends on Mg(2+) as a cofactor. Requires Co(2+) as cofactor. Mn(2+) serves as cofactor.

It localises to the cytoplasm. The catalysed reaction is (2E,6E)-farnesyl diphosphate = (E)-beta-farnesene + diphosphate. The protein operates within secondary metabolite biosynthesis; terpenoid biosynthesis. Functionally, sesquiterpene cyclase catalyzing the production of beta-farnesene from farnesyl diphosphate. The protein is (E)-beta-farnesene synthase of Citrus junos (Yuzu).